Here is a 183-residue protein sequence, read N- to C-terminus: Large ribosomal subunit protein uL6 (183 aa).

It belongs to the universal ribosomal protein uL6 family. In terms of assembly, part of the 50S ribosomal subunit.

Its function is as follows. This protein binds to the 23S rRNA, and is important in its secondary structure. It is located near the subunit interface in the base of the L7/L12 stalk, and near the tRNA binding site of the peptidyltransferase center. This Methanococcus aeolicus (strain ATCC BAA-1280 / DSM 17508 / OCM 812 / Nankai-3) protein is Large ribosomal subunit protein uL6.